Reading from the N-terminus, the 294-residue chain is UDP-3-O-acyl-N-acetylglucosamine deacetylase (294 aa).

3 residues coordinate Zn(2+): histidine 75, histidine 232, and aspartate 236. Catalysis depends on histidine 259, which acts as the Proton donor.

This sequence belongs to the LpxC family. The cofactor is Zn(2+).

The catalysed reaction is a UDP-3-O-[(3R)-3-hydroxyacyl]-N-acetyl-alpha-D-glucosamine + H2O = a UDP-3-O-[(3R)-3-hydroxyacyl]-alpha-D-glucosamine + acetate. The protein operates within glycolipid biosynthesis; lipid IV(A) biosynthesis; lipid IV(A) from (3R)-3-hydroxytetradecanoyl-[acyl-carrier-protein] and UDP-N-acetyl-alpha-D-glucosamine: step 2/6. Its function is as follows. Catalyzes the hydrolysis of UDP-3-O-myristoyl-N-acetylglucosamine to form UDP-3-O-myristoylglucosamine and acetate, the committed step in lipid A biosynthesis. This is UDP-3-O-acyl-N-acetylglucosamine deacetylase from Campylobacter jejuni subsp. jejuni serotype O:2 (strain ATCC 700819 / NCTC 11168).